The sequence spans 527 residues: Fusicoccadiene C-8 hydroxylase (527 aa).

The helical transmembrane segment at 15-35 threads the bilayer; sequence GKPLLLFLILITLTYSLGIVF. An N-linked (GlcNAc...) asparagine glycan is attached at asparagine 125. Cysteine 465 lines the heme pocket. Asparagine 496 carries an N-linked (GlcNAc...) asparagine glycan.

This sequence belongs to the cytochrome P450 family. The cofactor is heme.

It is found in the membrane. It participates in mycotoxin biosynthesis. In terms of biological role, cytochrome P450 monooxygenase; part of the gene cluster that mediates the biosynthesis of the diterpene glucoside brassicicene C. In the first step of the brassicicene C biosynthesis, the bifunctional diterpene synthase bsc8 that possesses both prenyl transferase and terpene cyclase activity, converts isopentenyl diphosphate and dimethylallyl diphosphate into geranylgeranyl diphosphate (GGDP) that is further converted into fusicocca-2,10(14)-diene, the first precursor for brassicicene C. Fusicocca-2,10(14)-diene is then substrate of cytochrome P450 monooxygenase bsc1 for hydroxylation at the C-8 position. Oxidation at C-16 position to aldehyde is then catalyzed by the cytochrome P450 monooyxygenase bsc7, yielding fusicocca-2,10(14)-diene-8-beta,16-diol. Follows the isomerization of the double bond and reduction of aldehyde to alcohol catalyzed by the short-chain dehydrogenase/reductase bsc3 to yield the diol compound fusicocca-1,10(14)-diene-8 beta,16-diol. The next step is the oxidation at the C-3 position of fusicocca-2,10(14)-diene-8-beta,16-diol catalyzed by the alpha-ketoglutarate dependent dioxygenase bsc9, to produce a triol compound. Methylation of the hydroxy group at position 16 is performed by the methyltransferase bsc6. 16-O-methylation is followed by oxidation at the C-13 position to ketone and an alkyl shift of the methyl group leads to brassicicene C. Although the probable acetyltransferase bsc4 is included in the gene cluster, no acetylation reactions are necessary for brassicicene C biosynthesis. However, the fact that brassicicene E, which is a structurally related compound having an acetoxy group at position 12, was previously isolated from another strain of A.brassicicola suggests that the ATCC 96836 strain might also produce a small amount of brassicicene E. In Alternaria brassicicola (Dark leaf spot agent), this protein is Fusicoccadiene C-8 hydroxylase.